Consider the following 338-residue polypeptide: Holliday junction branch migration complex subunit RuvB (338 aa).

Residues Met-1–Tyr-180 are large ATPase domain (RuvB-L). ATP contacts are provided by Leu-19, Arg-20, Gly-61, Lys-64, Thr-65, Thr-66, Arg-170, Tyr-180, and Arg-217. Thr-65 is a Mg(2+) binding site. A small ATPAse domain (RuvB-S) region spans residues Thr-181–Glu-251. A head domain (RuvB-H) region spans residues Glu-254–Arg-338. DNA is bound by residues Lys-309 and Arg-314.

The protein belongs to the RuvB family. Homohexamer. Forms an RuvA(8)-RuvB(12)-Holliday junction (HJ) complex. HJ DNA is sandwiched between 2 RuvA tetramers; dsDNA enters through RuvA and exits via RuvB. An RuvB hexamer assembles on each DNA strand where it exits the tetramer. Each RuvB hexamer is contacted by two RuvA subunits (via domain III) on 2 adjacent RuvB subunits; this complex drives branch migration. In the full resolvosome a probable DNA-RuvA(4)-RuvB(12)-RuvC(2) complex forms which resolves the HJ.

The protein resides in the cytoplasm. The catalysed reaction is ATP + H2O = ADP + phosphate + H(+). The RuvA-RuvB-RuvC complex processes Holliday junction (HJ) DNA during genetic recombination and DNA repair, while the RuvA-RuvB complex plays an important role in the rescue of blocked DNA replication forks via replication fork reversal (RFR). RuvA specifically binds to HJ cruciform DNA, conferring on it an open structure. The RuvB hexamer acts as an ATP-dependent pump, pulling dsDNA into and through the RuvAB complex. RuvB forms 2 homohexamers on either side of HJ DNA bound by 1 or 2 RuvA tetramers; 4 subunits per hexamer contact DNA at a time. Coordinated motions by a converter formed by DNA-disengaged RuvB subunits stimulates ATP hydrolysis and nucleotide exchange. Immobilization of the converter enables RuvB to convert the ATP-contained energy into a lever motion, pulling 2 nucleotides of DNA out of the RuvA tetramer per ATP hydrolyzed, thus driving DNA branch migration. The RuvB motors rotate together with the DNA substrate, which together with the progressing nucleotide cycle form the mechanistic basis for DNA recombination by continuous HJ branch migration. Branch migration allows RuvC to scan DNA until it finds its consensus sequence, where it cleaves and resolves cruciform DNA. In Caldicellulosiruptor saccharolyticus (strain ATCC 43494 / DSM 8903 / Tp8T 6331), this protein is Holliday junction branch migration complex subunit RuvB.